The chain runs to 2175 residues: Genome polyprotein (2175 aa).

Glycine 2 is lipidated: N-myristoyl glycine; by host. Over 2–1485 (GAQLSRNTAG…NVNRALAVIQ (1484 aa)) the chain is Cytoplasmic. Amphipathic alpha-helix regions lie at residues 557–574 (ILQN…DKQV) and 560–581 (NDPG…LVAG). Residues histidine 861 and aspartate 879 each act as for protease 2A activity in the active site. Positions 896 and 898 each coordinate Zn(2+). Residue cysteine 950 is the For protease 2A activity of the active site. Cysteine 956 and histidine 958 together coordinate Zn(2+). Residues 1090–1162 (SDNWMKKFTE…EHSSASQERQ (73 aa)) are membrane-binding. The segment at 1090–1228 (SDNWMKKFTE…SPGTGQSLAT (139 aa)) is oligomerization. Residues 1111–1115 (AAKIS) form an RNA-binding region. Residues 1194 to 1352 (EKRVLGAMQF…YKRDGVTLDV (159 aa)) enclose the SF3 helicase domain. Residues cysteine 1359, cysteine 1370, and cysteine 1375 each coordinate Zn(2+). A C4-type; degenerate zinc finger spans residues 1359–1375 (CEDCSPANFKKCMPLIC). The interval 1403 to 1410 (ESNRRYNI) is RNA-binding. The tract at residues 1414-1419 (LEALFQ) is oligomerization. The stretch at 1486-1501 (SVSLIAAVAGTIYIVY) is an intramembrane region. Residues 1502–2175 (RLFSGMQGPY…ALERKWYDSF (674 aa)) are Cytoplasmic-facing. Tyrosine 1511 bears the O-(5'-phospho-RNA)-tyrosine mark. In terms of domain architecture, Peptidase C3 spans 1532-1710 (GPLFDFGVSL…FAASLLRRYF (179 aa)). Catalysis depends on for protease 3C activity residues histidine 1571, glutamate 1602, and cysteine 1678. Positions 1941-2056 (GELFGFDYTA…SYPYEIDASL (116 aa)) constitute a RdRp catalytic domain. The Mg(2+) site is built by aspartate 1947 and aspartate 2042.

This sequence belongs to the picornaviruses polyprotein family. As to quaternary structure, interacts with capsid protein VP1 and capsid protein VP3 to form heterotrimeric protomers. Interacts with capsid protein VP0, and capsid protein VP3 to form heterotrimeric protomers. Five protomers subsequently associate to form pentamers which serve as building blocks for the capsid. Interacts with capsid protein VP2, capsid protein VP3 and capsid protein VP4 following cleavage of capsid protein VP0. In terms of assembly, interacts with capsid protein VP1 and capsid protein VP3 in the mature capsid. As to quaternary structure, interacts with capsid protein VP0 and capsid protein VP1 to form heterotrimeric protomers. Five protomers subsequently associate to form pentamers which serve as building blocks for the capsid. Interacts with capsid protein VP4 in the mature capsid. Interacts with protein 2C; this interaction may be important for virion morphogenesis. Interacts with capsid protein VP1 and capsid protein VP3. In terms of assembly, homodimer. As to quaternary structure, homohexamer; forms a hexameric ring structure with 6-fold symmetry characteristic of AAA+ ATPases. Interacts (via N-terminus) with host RTN3 (via reticulon domain); this interaction is important for viral replication. Interacts with capsid protein VP3; this interaction may be important for virion morphogenesis. Interacts with protein 3CD. In terms of assembly, homodimer. Interacts with host GBF1. Interacts (via GOLD domain) with host ACBD3 (via GOLD domain); this interaction allows the formation of a viral protein 3A/ACBD3 heterotetramer with a 2:2 stoichiometry, which will stimulate the recruitment of host PI4KB in order to synthesize PI4P at the viral RNA replication sites. As to quaternary structure, interacts with RNA-directed RNA polymerase. Interacts with protein 3AB and with RNA-directed RNA polymerase. In terms of assembly, interacts with Viral protein genome-linked and with protein 3CD. Mg(2+) serves as cofactor. Specific enzymatic cleavages in vivo by the viral proteases yield processing intermediates and the mature proteins. Post-translationally, myristoylation is required for the formation of pentamers during virus assembly. Further assembly of 12 pentamers and a molecule of genomic RNA generates the provirion. In terms of processing, during virion maturation, immature virions are rendered infectious following cleavage of VP0 into VP4 and VP2. This maturation seems to be an autocatalytic event triggered by the presence of RNA in the capsid and it is followed by a conformational change infectious virion. Myristoylation is required during RNA encapsidation and formation of the mature virus particle. Post-translationally, VPg is uridylylated by the polymerase into VPg-pUpU. This acts as a nucleotide-peptide primer for the genomic RNA replication.

Its subcellular location is the virion. The protein resides in the host cytoplasm. It is found in the host cytoplasmic vesicle membrane. It localises to the host nucleus. The enzyme catalyses a ribonucleoside 5'-triphosphate + H2O = a ribonucleoside 5'-diphosphate + phosphate + H(+). The catalysed reaction is Selective cleavage of Tyr-|-Gly bond in the picornavirus polyprotein.. It carries out the reaction RNA(n) + a ribonucleoside 5'-triphosphate = RNA(n+1) + diphosphate. It catalyses the reaction Selective cleavage of Gln-|-Gly bond in the poliovirus polyprotein. In other picornavirus reactions Glu may be substituted for Gln, and Ser or Thr for Gly.. Its activity is regulated as follows. Replication or transcription is subject to high level of random mutations by the nucleotide analog ribavirin. Functionally, forms an icosahedral capsid of pseudo T=3 symmetry with capsid proteins VP2 and VP3. The capsid is 300 Angstroms in diameter, composed of 60 copies of each capsid protein and enclosing the viral positive strand RNA genome. Capsid protein VP1 mainly forms the vertices of the capsid. Capsid protein VP1 interacts with host cell receptor to provide virion attachment to target host cells. This attachment induces virion internalization. Tyrosine kinases are probably involved in the entry process. After binding to its receptor, the capsid undergoes conformational changes. Capsid protein VP1 N-terminus (that contains an amphipathic alpha-helix) and capsid protein VP4 are externalized. Together, they shape a pore in the host membrane through which viral genome is translocated to host cell cytoplasm. In terms of biological role, forms an icosahedral capsid of pseudo T=3 symmetry with capsid proteins VP2 and VP3. The capsid is 300 Angstroms in diameter, composed of 60 copies of each capsid protein and enclosing the viral positive strand RNA genome. Lies on the inner surface of the capsid shell. After binding to the host receptor, the capsid undergoes conformational changes. Capsid protein VP4 is released, Capsid protein VP1 N-terminus is externalized, and together, they shape a pore in the host membrane through which the viral genome is translocated into the host cell cytoplasm. Its function is as follows. Component of immature procapsids, which is cleaved into capsid proteins VP4 and VP2 after maturation. Allows the capsid to remain inactive before the maturation step. Functionally, cysteine protease that cleaves viral polyprotein and specific host proteins. It is responsible for the autocatalytic cleavage between the P1 and P2 regions, which is the first cleavage occurring in the polyprotein. Also cleaves the host translation initiation factor EIF4G1, in order to shut down the capped cellular mRNA translation. Inhibits the host nucleus-cytoplasm protein and RNA trafficking by cleaving host members of the nuclear pores. Counteracts stress granule formation probably by antagonizing its assembly or promoting its dissassembly. In terms of biological role, plays an essential role in the virus replication cycle by acting as a viroporin. Creates a pore in the host endoplasmic reticulum and as a consequence releases Ca2+ in the cytoplasm of infected cell. In turn, high levels of cytoplasmic calcium may trigger membrane trafficking and transport of viral ER-associated proteins to viroplasms, sites of viral genome replication. Induces and associates with structural rearrangements of intracellular membranes. Displays RNA-binding, nucleotide binding and NTPase activities. May play a role in virion morphogenesis and viral RNA encapsidation by interacting with the capsid protein VP3. Its function is as follows. Localizes the viral replication complex to the surface of membranous vesicles. Together with protein 3CD binds the Cis-Active RNA Element (CRE) which is involved in RNA synthesis initiation. Acts as a cofactor to stimulate the activity of 3D polymerase, maybe through a nucleid acid chaperone activity. Functionally, localizes the viral replication complex to the surface of membranous vesicles. It inhibits host cell endoplasmic reticulum-to-Golgi apparatus transport and causes the disassembly of the Golgi complex, possibly through GBF1 interaction. This would result in depletion of MHC, trail receptors and IFN receptors at the host cell surface. Plays an essential role in viral RNA replication by recruiting ACBD3 and PI4KB at the viral replication sites, thereby allowing the formation of the rearranged membranous structures where viral replication takes place. In terms of biological role, acts as a primer for viral RNA replication and remains covalently bound to viral genomic RNA. VPg is uridylylated prior to priming replication into VPg-pUpU. The oriI viral genomic sequence may act as a template for this. The VPg-pUpU is then used as primer on the genomic RNA poly(A) by the RNA-dependent RNA polymerase to replicate the viral genome. During genome replication, the VPg-RNA linkage is removed by the host TDP2, thereby accelerating replication. During the late stage of the replication cycle, host TDP2 is excluded from sites of viral RNA synthesis and encapsidation, allowing for the generation of progeny virions. Involved in the viral replication complex and viral polypeptide maturation. It exhibits protease activity with a specificity and catalytic efficiency that is different from protease 3C. Protein 3CD lacks polymerase activity. Protein 3CD binds to the 5'UTR of the viral genome. Its function is as follows. Replicates the viral genomic RNA on the surface of intracellular membranes. May form linear arrays of subunits that propagate along a strong head-to-tail interaction called interface-I. Covalently attaches UMP to a tyrosine of VPg, which is used to prime RNA synthesis. The positive stranded RNA genome is first replicated at virus induced membranous vesicles, creating a dsRNA genomic replication form. This dsRNA is then used as template to synthesize positive stranded RNA genomes. ss(+)RNA genomes are either translated, replicated or encapsidated. Functionally, major viral protease that mediates proteolytic processing of the polyprotein. Cleaves host EIF5B, contributing to host translation shutoff. Also cleaves host PABPC1, contributing to host translation shutoff. Cleaves host NLRP1, triggers host N-glycine-mediated degradation of the autoinhibitory NLRP1 N-terminal fragment. The polypeptide is Genome polyprotein (Bos taurus (Bovine)).